The following is a 139-amino-acid chain: Exodeoxyribonuclease 7 small subunit (139 aa).

Disordered stretches follow at residues 1–26 (MAKK…LGDF) and 82–139 (DAEG…EDDE). Positions 130–139 (ADLDSAEDDE) are enriched in acidic residues.

This sequence belongs to the XseB family. In terms of assembly, heterooligomer composed of large and small subunits.

It localises to the cytoplasm. The catalysed reaction is Exonucleolytic cleavage in either 5'- to 3'- or 3'- to 5'-direction to yield nucleoside 5'-phosphates.. Bidirectionally degrades single-stranded DNA into large acid-insoluble oligonucleotides, which are then degraded further into small acid-soluble oligonucleotides. This is Exodeoxyribonuclease 7 small subunit from Rhodopirellula baltica (strain DSM 10527 / NCIMB 13988 / SH1).